The primary structure comprises 454 residues: MWRQGMFVLPFMTRLGVTNSWGGWTISGESTSNPGLWSYEGVAASHIILSGLLFLAAIWHWVFWDLELFRDPRTQQPALDLPKIFGIHLFLSGVLCFGFGAFHVTGLFGPGIWVSDPYGLTGAVEPVAPAWGAEGFDPYNPGGIAAHHIAAGIVGILAGLFHLSVRPPQRLYKALRMGNVETVLSSSIAAVFWAAFVVGGTMWYGCAATPIELFGPTRYQWDQGFFQQEIEKRVQTSVAGGASLSTAWSTIPEKLAFYDYIGNNPAKGGLFRSGPMDNGDGIAAGWLGHATFTDKNGRELFVRRMPTFFETFPVILIDGDGVVRADVPFRRAESKYSIEQVGVNVTFYGGELDGLTFTDPATVKKYARRAQLGEVFEFDRATLQSDGVFRSSPRAWFTFAHVSFALLFFFGHIWHGARTIFRDVFAGIDPDLDEQVEFGAFQKLGDVTTRRQAV.

6 helical membrane passes run 6-26 (MFVL…GWTI), 47-61 (IILS…IWHW), 86-102 (GIHL…FGAF), 149-164 (IAAG…FHLS), 183-198 (VLSS…AFVV), and 403-418 (SFAL…HGAR).

It belongs to the PsbB/PsbC family. PsbB subfamily. As to quaternary structure, PSII is composed of 1 copy each of membrane proteins PsbA, PsbB, PsbC, PsbD, PsbE, PsbF, PsbH, PsbI, PsbJ, PsbK, PsbL, PsbM, PsbT, PsbX, PsbY, PsbZ, Psb30/Ycf12, at least 3 peripheral proteins of the oxygen-evolving complex and a large number of cofactors. It forms dimeric complexes. Binds multiple chlorophylls. PSII binds additional chlorophylls, carotenoids and specific lipids. is required as a cofactor.

It localises to the plastid. The protein resides in the chloroplast thylakoid membrane. Functionally, one of the components of the core complex of photosystem II (PSII). It binds chlorophyll and helps catalyze the primary light-induced photochemical processes of PSII. PSII is a light-driven water:plastoquinone oxidoreductase, using light energy to abstract electrons from H(2)O, generating O(2) and a proton gradient subsequently used for ATP formation. The polypeptide is Photosystem II CP47 reaction center protein (Ostreococcus tauri).